The following is a 634-amino-acid chain: Extracellular metalloproteinase mep (634 aa).

A signal peptide spans 1–18 (MRGLLLAGALALPASVFA). Positions 19 to 245 (HPAHQSYGLN…IHGVVDYVAE (227 aa)) are excised as a propeptide. Residue Asn-286 is glycosylated (N-linked (GlcNAc...) asparagine). Residue His-429 coordinates Zn(2+). Glu-430 is an active-site residue. His-433 provides a ligand contact to Zn(2+).

This sequence belongs to the peptidase M36 family. Requires Zn(2+) as cofactor.

It is found in the secreted. Its function is as follows. Secreted metalloproteinase that allows assimilation of proteinaceous substrates and probably acts as a virulence factor. This Aspergillus fumigatus (strain CBS 144.89 / FGSC A1163 / CEA10) (Neosartorya fumigata) protein is Extracellular metalloproteinase mep (mep).